The following is a 110-amino-acid chain: Cytochrome bo(3) ubiquinol oxidase subunit 4 (110 aa).

The Cytoplasmic portion of the chain corresponds to 1 to 18; it reads MANAHDTHHEGNHGSVKS. A helical transmembrane segment spans residues 19–39; sequence YMIGFILSIILTAIPFGLAMS. Residues 40 to 46 are Periplasmic-facing; sequence PSLPKNL. A helical transmembrane segment spans residues 47–67; sequence TVLIIVAMAVIQVVVHLVYFL. Topologically, residues 68 to 78 are cytoplasmic; that stretch reads HMDRSKEQRNN. The chain crosses the membrane as a helical span at residues 79 to 99; sequence VWTFLFTTLVIALLVGLSLWI. Topologically, residues 100-110 are periplasmic; the sequence is MFSIHFEMLAK.

The protein belongs to the cytochrome c oxidase bacterial subunit 4 family. Heterooctamer of two A chains, two B chains, two C chains and two D chains.

It localises to the cell inner membrane. Its function is as follows. Cytochrome bo(3) ubiquinol terminal oxidase is the component of the aerobic respiratory chain of E.coli that predominates when cells are grown at high aeration. Has proton pump activity across the membrane in addition to electron transfer, pumping 2 protons/electron. The polypeptide is Cytochrome bo(3) ubiquinol oxidase subunit 4 (cyoD) (Pseudomonas putida (Arthrobacter siderocapsulatus)).